The primary structure comprises 285 residues: MRGKHIFIITALISILMLAACGQKNSSATVATATDSTITKSDFEKQLKDRYGKDMLYEMIAQDVITKKYKVSDDDVDKEVQKAKSQYGDQFKNVLKNNGLKDEADFKNQIKFKLSMNKAIKQSVTEKDVKDHYKPEIKASHILVSDENEAKEIKKKLDTGASFEELAKQESQDLLSKEKGGDLGYFHSGAMTPEFETAAYKLKIGQISDPVQSPNGYHIIKLTGKKDLKPYDEVKNSIRKNLEEERTADPIFGKKLLQSELKKANIKINDSELEDTFTIVSPQGN.

A signal peptide spans 1 to 20 (MRGKHIFIITALISILMLAA). Residue C21 is the site of N-palmitoyl cysteine attachment. The S-diacylglycerol cysteine moiety is linked to residue C21. Positions 134 to 224 (KPEIKASHIL…NGYHIIKLTG (91 aa)) constitute a PpiC domain.

It belongs to the PrsA family.

The protein localises to the cell membrane. It carries out the reaction [protein]-peptidylproline (omega=180) = [protein]-peptidylproline (omega=0). Its function is as follows. Plays a major role in protein secretion by helping the post-translocational extracellular folding of several secreted proteins. Important for the secretion of the protective antigen. The three PsrA proteins in this organism show different but overlapping substrate specificities. The polypeptide is Foldase protein PrsA 2 (prsA2) (Bacillus anthracis).